Consider the following 234-residue polypeptide: Superoxide dismutase [Mn], mitochondrial (234 aa).

The N-terminal 34 residues, 1-34 (MFSIRSSSRVLLKASSATTRATLNAAASKTFTRS), are a transit peptide targeting the mitochondrion. Mn(2+) contacts are provided by H60, H108, D198, and H202.

This sequence belongs to the iron/manganese superoxide dismutase family. As to quaternary structure, homotetramer. It depends on Mn(2+) as a cofactor.

It is found in the mitochondrion matrix. The enzyme catalyses 2 superoxide + 2 H(+) = H2O2 + O2. Its function is as follows. Destroys superoxide anion radicals which are normally produced within the cells and which are toxic to biological systems. The sequence is that of Superoxide dismutase [Mn], mitochondrial (SOD2) from Candida albicans (Yeast).